The chain runs to 675 residues: Alpha-1,4-glucan:maltose-1-phosphate maltosyltransferase (675 aa).

Alpha-maltose 1-phosphate is bound by residues K256, Q316, and D351. D386 (nucleophile) is an active-site residue. N387 serves as a coordination point for alpha-maltose 1-phosphate. Residue E415 is the Proton donor of the active site. 525 to 526 (KY) is an alpha-maltose 1-phosphate binding site.

It belongs to the glycosyl hydrolase 13 family. GlgE subfamily. Homodimer.

The catalysed reaction is alpha-maltose 1-phosphate + [(1-&gt;4)-alpha-D-glucosyl](n) = [(1-&gt;4)-alpha-D-glucosyl](n+2) + phosphate. Maltosyltransferase that uses maltose 1-phosphate (M1P) as the sugar donor to elongate linear or branched alpha-(1-&gt;4)-glucans. Is involved in a branched alpha-glucan biosynthetic pathway from trehalose, together with TreS, Mak and GlgB. In Corynebacterium glutamicum (strain ATCC 13032 / DSM 20300 / JCM 1318 / BCRC 11384 / CCUG 27702 / LMG 3730 / NBRC 12168 / NCIMB 10025 / NRRL B-2784 / 534), this protein is Alpha-1,4-glucan:maltose-1-phosphate maltosyltransferase.